Here is a 249-residue protein sequence, read N- to C-terminus: ATP synthase subunit a, chloroplastic (249 aa).

A run of 5 helical transmembrane segments spans residues 40 to 60 (QVLI…VLVV), 97 to 117 (VPFI…GALL), 136 to 156 (INTT…AGLS), 201 to 221 (LVVV…VMFL), and 222 to 242 (GLFT…AYIG).

The protein belongs to the ATPase A chain family. As to quaternary structure, F-type ATPases have 2 components, CF(1) - the catalytic core - and CF(0) - the membrane proton channel. CF(1) has five subunits: alpha(3), beta(3), gamma(1), delta(1), epsilon(1). CF(0) has four main subunits: a, b, b' and c.

The protein localises to the plastid. The protein resides in the chloroplast thylakoid membrane. Its function is as follows. Key component of the proton channel; it plays a direct role in the translocation of protons across the membrane. The sequence is that of ATP synthase subunit a, chloroplastic from Aethionema grandiflorum (Persian stone-cress).